The sequence spans 676 residues: DNA ligase (676 aa).

NAD(+) is bound by residues 34 to 38, 84 to 85, and Glu-116; these read DAEYD and SL. The N6-AMP-lysine intermediate role is filled by Lys-118. 4 residues coordinate NAD(+): Arg-139, Glu-174, Lys-294, and Lys-318. Zn(2+) is bound by residues Cys-412, Cys-415, Cys-428, and Cys-433. In terms of domain architecture, BRCT spans 589-676; that stretch reads KGGEALKGLT…RTGKKAEELV (88 aa).

The protein belongs to the NAD-dependent DNA ligase family. LigA subfamily. It depends on Mg(2+) as a cofactor. Mn(2+) serves as cofactor.

It catalyses the reaction NAD(+) + (deoxyribonucleotide)n-3'-hydroxyl + 5'-phospho-(deoxyribonucleotide)m = (deoxyribonucleotide)n+m + AMP + beta-nicotinamide D-nucleotide.. In terms of biological role, DNA ligase that catalyzes the formation of phosphodiester linkages between 5'-phosphoryl and 3'-hydroxyl groups in double-stranded DNA using NAD as a coenzyme and as the energy source for the reaction. It is essential for DNA replication and repair of damaged DNA. The sequence is that of DNA ligase from Thermus thermophilus (strain ATCC 27634 / DSM 579 / HB8).